The primary structure comprises 503 residues: Glycerol kinase (503 aa).

Threonine 14 lines the ADP pocket. Positions 14, 15, and 16 each coordinate ATP. Threonine 14 serves as a coordination point for sn-glycerol 3-phosphate. Arginine 18 serves as a coordination point for ADP. Residues arginine 84, glutamate 85, tyrosine 136, and aspartate 246 each coordinate sn-glycerol 3-phosphate. Glycerol is bound by residues arginine 84, glutamate 85, tyrosine 136, aspartate 246, and glutamine 247. Residues threonine 268 and glycine 311 each coordinate ADP. ATP contacts are provided by threonine 268, glycine 311, glutamine 315, and glycine 412. 2 residues coordinate ADP: glycine 412 and asparagine 416.

This sequence belongs to the FGGY kinase family. Homotetramer and homodimer (in equilibrium). Heterodimer with EIIA-Glc. Binds 1 zinc ion per glycerol kinase EIIA-Glc dimer. The zinc ion is important for dimerization.

It carries out the reaction glycerol + ATP = sn-glycerol 3-phosphate + ADP + H(+). Its pathway is polyol metabolism; glycerol degradation via glycerol kinase pathway; sn-glycerol 3-phosphate from glycerol: step 1/1. Its activity is regulated as follows. Activity of this regulatory enzyme is affected by several metabolites. Allosterically and non-competitively inhibited by fructose 1,6-bisphosphate (FBP) and unphosphorylated phosphocarrier protein EIIA-Glc (III-Glc), an integral component of the bacterial phosphotransferase (PTS) system. Functionally, key enzyme in the regulation of glycerol uptake and metabolism. Catalyzes the phosphorylation of glycerol to yield sn-glycerol 3-phosphate. This is Glycerol kinase from Klebsiella pneumoniae subsp. pneumoniae (strain ATCC 700721 / MGH 78578).